Here is a 384-residue protein sequence, read N- to C-terminus: Mitogen-activated protein kinase 8 (384 aa).

The region spanning Tyr26–Ile321 is the Protein kinase domain. ATP is bound by residues Gly33–Gly38 and Lys55. Residue Asp151 is the Proton acceptor of the active site. Thr183 carries the post-translational modification Phosphothreonine. The TXY motif lies at Thr183–Tyr185. Residue Tyr185 is modified to Phosphotyrosine.

This sequence belongs to the protein kinase superfamily. CMGC Ser/Thr protein kinase family. MAP kinase subfamily. The cofactor is Mg(2+). Dually phosphorylated on Thr-183 and Tyr-185, which activates the enzyme.

The protein resides in the cytoplasm. It localises to the nucleus. It is found in the synapse. It catalyses the reaction L-seryl-[protein] + ATP = O-phospho-L-seryl-[protein] + ADP + H(+). The enzyme catalyses L-threonyl-[protein] + ATP = O-phospho-L-threonyl-[protein] + ADP + H(+). Its activity is regulated as follows. Activated by threonine and tyrosine phosphorylation. Its function is as follows. Responds to activation by environmental stress and pro-inflammatory cytokines by phosphorylating a number of transcription factors, primarily components of AP-1 such as c-Jun and ATF2 and thus regulates AP-1 transcriptional activity. May play a role in the regulation of the circadian clock. The protein is Mitogen-activated protein kinase 8 (mapk8) of Danio rerio (Zebrafish).